The sequence spans 425 residues: Enolase (425 aa).

Glutamine 163 is a (2R)-2-phosphoglycerate binding site. Catalysis depends on glutamate 205, which acts as the Proton donor. Mg(2+)-binding residues include aspartate 242, glutamate 286, and aspartate 313. Lysine 338, arginine 367, serine 368, and lysine 389 together coordinate (2R)-2-phosphoglycerate. The active-site Proton acceptor is the lysine 338.

Belongs to the enolase family. Mg(2+) is required as a cofactor.

The protein localises to the cytoplasm. It localises to the secreted. Its subcellular location is the cell surface. It catalyses the reaction (2R)-2-phosphoglycerate = phosphoenolpyruvate + H2O. Its pathway is carbohydrate degradation; glycolysis; pyruvate from D-glyceraldehyde 3-phosphate: step 4/5. In terms of biological role, catalyzes the reversible conversion of 2-phosphoglycerate (2-PG) into phosphoenolpyruvate (PEP). It is essential for the degradation of carbohydrates via glycolysis. In Lactobacillus delbrueckii subsp. bulgaricus (strain ATCC 11842 / DSM 20081 / BCRC 10696 / JCM 1002 / NBRC 13953 / NCIMB 11778 / NCTC 12712 / WDCM 00102 / Lb 14), this protein is Enolase.